The following is a 141-amino-acid chain: Hemoglobin subunit alpha (141 aa).

The Globin domain occupies 1-141 (VLSPDDKKHV…VSTVLTSKYR (141 aa)). S3 carries the post-translational modification Phosphoserine. N6-succinyllysine is present on residues K7 and K11. K16 is modified (N6-acetyllysine; alternate). Position 16 is an N6-succinyllysine; alternate (K16). A Phosphotyrosine modification is found at Y24. At S35 the chain carries Phosphoserine. K40 is modified (N6-succinyllysine). Phosphoserine is present on S49. H58 contributes to the O2 binding site. H87 is a binding site for heme b. S102 carries the post-translational modification Phosphoserine. T108 carries the post-translational modification Phosphothreonine. Phosphoserine occurs at positions 124 and 131. Phosphothreonine is present on residues T134 and T137. S138 is modified (phosphoserine).

The protein belongs to the globin family. As to quaternary structure, heterotetramer of two alpha chains and two beta chains. Red blood cells.

Functionally, involved in oxygen transport from the lung to the various peripheral tissues. Its function is as follows. Hemopressin acts as an antagonist peptide of the cannabinoid receptor CNR1. Hemopressin-binding efficiently blocks cannabinoid receptor CNR1 and subsequent signaling. The polypeptide is Hemoglobin subunit alpha (HBA) (Cercocebus atys (Sooty mangabey)).